A 179-amino-acid polypeptide reads, in one-letter code: Large ribosomal subunit protein uL6 (179 aa).

This sequence belongs to the universal ribosomal protein uL6 family. Part of the 50S ribosomal subunit.

In terms of biological role, this protein binds to the 23S rRNA, and is important in its secondary structure. It is located near the subunit interface in the base of the L7/L12 stalk, and near the tRNA binding site of the peptidyltransferase center. The sequence is that of Large ribosomal subunit protein uL6 from Bifidobacterium adolescentis (strain ATCC 15703 / DSM 20083 / NCTC 11814 / E194a).